The chain runs to 238 residues: Ribose-5-phosphate isomerase A (238 aa).

Residues 30–33 (SGST), 87–90 (DGAD), and 100–103 (KGGG) each bind substrate. The active-site Proton acceptor is E109. K127 is a substrate binding site.

The protein belongs to the ribose 5-phosphate isomerase family. In terms of assembly, homodimer.

The catalysed reaction is aldehydo-D-ribose 5-phosphate = D-ribulose 5-phosphate. It functions in the pathway carbohydrate degradation; pentose phosphate pathway; D-ribose 5-phosphate from D-ribulose 5-phosphate (non-oxidative stage): step 1/1. Catalyzes the reversible conversion of ribose-5-phosphate to ribulose 5-phosphate. The chain is Ribose-5-phosphate isomerase A from Prochlorococcus marinus (strain MIT 9303).